Here is a 745-residue protein sequence, read N- to C-terminus: Phosphoribosylformylglycinamidine synthase subunit PurL (745 aa).

H47 is a catalytic residue. 2 residues coordinate ATP: Y50 and K90. A Mg(2+)-binding site is contributed by E92. Substrate contacts are provided by residues 93–96 and R115; that span reads SHNH. Catalysis depends on H94, which acts as the Proton acceptor. D116 lines the Mg(2+) pocket. Q240 contributes to the substrate binding site. Mg(2+) is bound at residue D268. 312–314 is a substrate binding site; sequence ESQ. ATP-binding residues include N501 and G538. N539 is a binding site for Mg(2+). S541 contacts substrate.

Belongs to the FGAMS family. Monomer. Part of the FGAM synthase complex composed of 1 PurL, 1 PurQ and 2 PurS subunits.

It is found in the cytoplasm. It carries out the reaction N(2)-formyl-N(1)-(5-phospho-beta-D-ribosyl)glycinamide + L-glutamine + ATP + H2O = 2-formamido-N(1)-(5-O-phospho-beta-D-ribosyl)acetamidine + L-glutamate + ADP + phosphate + H(+). Its pathway is purine metabolism; IMP biosynthesis via de novo pathway; 5-amino-1-(5-phospho-D-ribosyl)imidazole from N(2)-formyl-N(1)-(5-phospho-D-ribosyl)glycinamide: step 1/2. In terms of biological role, part of the phosphoribosylformylglycinamidine synthase complex involved in the purines biosynthetic pathway. Catalyzes the ATP-dependent conversion of formylglycinamide ribonucleotide (FGAR) and glutamine to yield formylglycinamidine ribonucleotide (FGAM) and glutamate. The FGAM synthase complex is composed of three subunits. PurQ produces an ammonia molecule by converting glutamine to glutamate. PurL transfers the ammonia molecule to FGAR to form FGAM in an ATP-dependent manner. PurS interacts with PurQ and PurL and is thought to assist in the transfer of the ammonia molecule from PurQ to PurL. This Leptospira interrogans serogroup Icterohaemorrhagiae serovar Lai (strain 56601) protein is Phosphoribosylformylglycinamidine synthase subunit PurL.